We begin with the raw amino-acid sequence, 293 residues long: Urease accessory protein UreD (293 aa).

Belongs to the UreD family. As to quaternary structure, ureD, UreF and UreG form a complex that acts as a GTP-hydrolysis-dependent molecular chaperone, activating the urease apoprotein by helping to assemble the nickel containing metallocenter of UreC. The UreE protein probably delivers the nickel.

The protein localises to the cytoplasm. Required for maturation of urease via the functional incorporation of the urease nickel metallocenter. The protein is Urease accessory protein UreD of Arthrobacter sp. (strain FB24).